We begin with the raw amino-acid sequence, 224 residues long: 7-cyano-7-deazaguanine synthase (224 aa).

12-22 (LSGGLDSSTVT) is a binding site for ATP. Positions 193, 201, 204, and 207 each coordinate Zn(2+).

This sequence belongs to the QueC family. It depends on Zn(2+) as a cofactor.

It catalyses the reaction 7-carboxy-7-deazaguanine + NH4(+) + ATP = 7-cyano-7-deazaguanine + ADP + phosphate + H2O + H(+). Its pathway is purine metabolism; 7-cyano-7-deazaguanine biosynthesis. Catalyzes the ATP-dependent conversion of 7-carboxy-7-deazaguanine (CDG) to 7-cyano-7-deazaguanine (preQ(0)). The sequence is that of 7-cyano-7-deazaguanine synthase from Prochlorococcus marinus (strain MIT 9312).